Consider the following 223-residue polypeptide: Urease subunit alpha (223 aa).

Residues M1–N101 are urease gamma. The tract at residues D102 to L223 is urease beta.

This sequence in the N-terminal section; belongs to the urease gamma subunit family. It in the C-terminal section; belongs to the urease beta subunit family. Heterohexamer of 3 UreA (alpha) and 3 UreB (beta) subunits.

It localises to the cytoplasm. It carries out the reaction urea + 2 H2O + H(+) = hydrogencarbonate + 2 NH4(+). Its pathway is nitrogen metabolism; urea degradation; CO(2) and NH(3) from urea (urease route): step 1/1. This Campylobacter lari protein is Urease subunit alpha.